The following is a 610-amino-acid chain: Membrane protein insertase YidC (610 aa).

A helical transmembrane segment spans residues 7–27 (FFITIALSILILALWQVFYLG). Positions 36 to 82 (QARIEEQQRQAQQAAQNRQASSSTGDTPQMPANPDSIPGQGDTKAAG) are disordered. The span at 44–55 (RQAQQAAQNRQA) shows a compositional bias: low complexity. 5 consecutive transmembrane segments (helical) span residues 358–378 (FDLL…FYLI), 387–407 (NFGV…FPLA), 458–478 (WPVL…YVTI), 510–530 (TVPH…IMFL), and 546–566 (IFTW…AGLV).

This sequence belongs to the OXA1/ALB3/YidC family. Type 1 subfamily. As to quaternary structure, interacts with the Sec translocase complex via SecD. Specifically interacts with transmembrane segments of nascent integral membrane proteins during membrane integration.

The protein localises to the cell inner membrane. In terms of biological role, required for the insertion and/or proper folding and/or complex formation of integral membrane proteins into the membrane. Involved in integration of membrane proteins that insert both dependently and independently of the Sec translocase complex, as well as at least some lipoproteins. Aids folding of multispanning membrane proteins. This is Membrane protein insertase YidC from Brucella melitensis biotype 1 (strain ATCC 23456 / CCUG 17765 / NCTC 10094 / 16M).